The chain runs to 1147 residues: Tip elongation aberrant protein 1 (1147 aa).

Basic residues predominate over residues 1–16 (MSFLFKRNKGSAHKPT). The disordered stretch occupies residues 1–64 (MSFLFKRNKG…TGSGSHITAS (64 aa)). Polar residues predominate over residues 18–32 (PNFSKTSTTPSTSQL). Kelch repeat units follow at residues 94–144 (EIYI…LIGN), 146–198 (FIVF…CLGS), 199–253 (KICL…TFSD), 254–303 (KLYI…VVEG), 305–351 (LYVF…TLSC), and 355–402 (TLVL…SNST). Disordered stretches follow at residues 384–403 (SVPT…NSTG) and 408–547 (SAFN…NAQS). 3 stretches are compositionally biased toward polar residues: residues 385–403 (VPTT…NSTG), 408–465 (SAFN…SNDL), and 472–489 (TRSN…LNSH). The segment covering 502 to 512 (SSLNSQQLSNQ) has biased composition (low complexity). Ser503 is modified (phosphoserine). The segment covering 519–547 (VSPTLSFVPSSHSMEQGNGSVASANNAQS) has biased composition (polar residues). Positions 538–1147 (SVASANNAQS…AKEPVHDNEN (610 aa)) are interaction with tea4. Coiled coils occupy residues 611–649 (KLYE…LEKV), 716–838 (QTSS…IIDA), 879–990 (KNNE…ALEE), and 1084–1105 (IKSL…AKEK). The interval 948-1147 (KALEQRNTGA…AKEPVHDNEN (200 aa)) is retention at microtubule cell ends.

Major component of the tea1 cell-end complex. Interacts with rax2, tea4 and tip1. Interacts with for3 in the presence of tea4.

The protein resides in the cytoplasm. Its subcellular location is the cytoskeleton. In terms of biological role, cell polarity protein. Acts as an end marker, directing the growth machinery to the cell poles. Involved in the regulation of microtubular organization, affecting the maintenance of a single central axis. Prevents the curling of microtubule tips around the cell ends and is required for the retention of polarity factors such as pom1, tip1 and tea2 at the cell ends, necessary for the cell to grow in a straight line. Links tip1 and tea4 in a common complex. The chain is Tip elongation aberrant protein 1 (tea1) from Schizosaccharomyces pombe (strain 972 / ATCC 24843) (Fission yeast).